The following is a 451-amino-acid chain: Bifunctional protein GlmU (451 aa).

The tract at residues 1-229 (MQRHAIILAA…FDEIIGVNDR (229 aa)) is pyrophosphorylase. UDP-N-acetyl-alpha-D-glucosamine-binding positions include 8-11 (LAAG), lysine 22, glutamine 72, and 77-78 (GT). Aspartate 102 contacts Mg(2+). UDP-N-acetyl-alpha-D-glucosamine-binding residues include glycine 139, glutamate 154, and asparagine 227. Asparagine 227 contacts Mg(2+). The tract at residues 230–250 (LMLSEAEKALQQRINRYHMEN) is linker. The tract at residues 251-451 (GVTIIDPSST…QVNKEGYLKK (201 aa)) is N-acetyltransferase. UDP-N-acetyl-alpha-D-glucosamine is bound by residues arginine 332 and lysine 350. Residue histidine 362 is the Proton acceptor of the active site. Residues tyrosine 365 and asparagine 376 each contribute to the UDP-N-acetyl-alpha-D-glucosamine site. Acetyl-CoA-binding positions include 385–386 (NY), alanine 422, and arginine 439.

It in the N-terminal section; belongs to the N-acetylglucosamine-1-phosphate uridyltransferase family. The protein in the C-terminal section; belongs to the transferase hexapeptide repeat family. As to quaternary structure, homotrimer. The cofactor is Mg(2+).

Its subcellular location is the cytoplasm. The catalysed reaction is alpha-D-glucosamine 1-phosphate + acetyl-CoA = N-acetyl-alpha-D-glucosamine 1-phosphate + CoA + H(+). The enzyme catalyses N-acetyl-alpha-D-glucosamine 1-phosphate + UTP + H(+) = UDP-N-acetyl-alpha-D-glucosamine + diphosphate. It functions in the pathway nucleotide-sugar biosynthesis; UDP-N-acetyl-alpha-D-glucosamine biosynthesis; N-acetyl-alpha-D-glucosamine 1-phosphate from alpha-D-glucosamine 6-phosphate (route II): step 2/2. The protein operates within nucleotide-sugar biosynthesis; UDP-N-acetyl-alpha-D-glucosamine biosynthesis; UDP-N-acetyl-alpha-D-glucosamine from N-acetyl-alpha-D-glucosamine 1-phosphate: step 1/1. Its pathway is bacterial outer membrane biogenesis; LPS lipid A biosynthesis. Functionally, catalyzes the last two sequential reactions in the de novo biosynthetic pathway for UDP-N-acetylglucosamine (UDP-GlcNAc). The C-terminal domain catalyzes the transfer of acetyl group from acetyl coenzyme A to glucosamine-1-phosphate (GlcN-1-P) to produce N-acetylglucosamine-1-phosphate (GlcNAc-1-P), which is converted into UDP-GlcNAc by the transfer of uridine 5-monophosphate (from uridine 5-triphosphate), a reaction catalyzed by the N-terminal domain. This chain is Bifunctional protein GlmU, found in Staphylococcus epidermidis.